We begin with the raw amino-acid sequence, 138 residues long: Small ribosomal subunit protein uS11c (138 aa).

Residues 1 to 23 (MKKPIPRIGSRRNGRIGSRKNGR) form a disordered region.

Belongs to the universal ribosomal protein uS11 family. In terms of assembly, part of the 30S ribosomal subunit.

The protein localises to the plastid. The protein resides in the chloroplast. This chain is Small ribosomal subunit protein uS11c, found in Amborella trichopoda.